A 447-amino-acid polypeptide reads, in one-letter code: Probable alpha-galactosidase B (447 aa).

The signal sequence occupies residues 1–25 (MTTFFSLTTAAAVLTLARGSNALVR). Cystine bridges form between C45-C77 and C127-C157. Catalysis depends on D155, which acts as the Nucleophile. N162 and N180 each carry an N-linked (GlcNAc...) asparagine glycan. Position 225-229 (225-229 (EWGQA)) interacts with substrate. N236 is a glycosylation site (N-linked (GlcNAc...) asparagine). D247 acts as the Proton donor in catalysis. N286 carries an N-linked (GlcNAc...) asparagine glycan.

It belongs to the glycosyl hydrolase 27 family.

The protein resides in the secreted. The catalysed reaction is Hydrolysis of terminal, non-reducing alpha-D-galactose residues in alpha-D-galactosides, including galactose oligosaccharides, galactomannans and galactolipids.. In terms of biological role, hydrolyzes a variety of simple alpha-D-galactoside as well as more complex molecules such as oligosaccharides and polysaccharides. The polypeptide is Probable alpha-galactosidase B (aglB) (Aspergillus fumigatus (strain ATCC MYA-4609 / CBS 101355 / FGSC A1100 / Af293) (Neosartorya fumigata)).